Reading from the N-terminus, the 694-residue chain is Protein NPGR1 (694 aa).

The tract at residues 12 to 40 (FEDQPGSPESLATRDFSASGLSSRNGGGD) is disordered. TPR repeat units lie at residues 32–65 (LSSR…SLNY), 66–101 (EEAR…TPRI), 135–168 (LEAI…VENA), 188–221 (QKAL…PWNL), 307–340 (GERW…SESR), 551–584 (TEAW…CYYS), 585–618 (PRGW…EPDH), 620–654 (PSIV…DPRN), and 655–688 (HDAW…ELSA).

As to quaternary structure, interacts with calmodulin in a calcium-dependent manner. Expressed in pollen, flowers, fruits and leaves.

This Arabidopsis thaliana (Mouse-ear cress) protein is Protein NPGR1.